Consider the following 131-residue polypeptide: Small ribosomal subunit protein uS11 (131 aa).

Belongs to the universal ribosomal protein uS11 family. In terms of assembly, part of the 30S ribosomal subunit. Interacts with proteins S7 and S18. Binds to IF-3.

Its function is as follows. Located on the platform of the 30S subunit, it bridges several disparate RNA helices of the 16S rRNA. Forms part of the Shine-Dalgarno cleft in the 70S ribosome. This Exiguobacterium sp. (strain ATCC BAA-1283 / AT1b) protein is Small ribosomal subunit protein uS11.